A 499-amino-acid polypeptide reads, in one-letter code: MSQLEHNIGLSIFEPVAKHRANRIVCTIGPSTQSVEALKNLMKSGMSVARMNFSHGSHEYHQTTINNVRAAAAELGLHIGIALDTKGPEIRTGLFKDGEVTFAPGDIVCVTTDPAYEKVGTKEKFYIDYPQLTKAVPVGGSIYVDDGVMTLRVLSKEDDRTLKCHVNNHHRLTDRRGINLPGCEVDLPAVSEKDRKDLEFGVAQGVDMIFASFIRTAEQVREVRAALGEKGKDILIISKIENHQGVQNIDSIIEASNGIMVARGDLGVEIPAEKVCVAQMCIISKCNVVGKPVICATQMLESMTSNPRPTRAEVSDVANAVLNGADCVMLSGETAKGKYPNEVVQYMARICVEAQSATHDTVMFNSIKNLQKIPMCPEEAVCSSAVASAFEVQAKAMLVLSNTGRSARLISKYRPNCPIICVTTRLQTCRQLNVTRSVVSVFYDAAKSGEDKDKEKRVKLGLDFAKKEKYASTGDVVVVVHADHSVKGYPNQTRLIYLP.

Arginine 50 is a substrate binding site. Residues asparagine 52, serine 54, aspartate 84, and threonine 85 each coordinate K(+). 52 to 55 (NFSH) contributes to the ATP binding site. Arginine 91 contributes to the ATP binding site. Glutamate 241 provides a ligand contact to Mg(2+). Substrate contacts are provided by glycine 264, aspartate 265, and threonine 297. Aspartate 265 is a binding site for Mg(2+).

Belongs to the pyruvate kinase family. Homotetramer. Mg(2+) serves as cofactor. K(+) is required as a cofactor.

It carries out the reaction pyruvate + ATP = phosphoenolpyruvate + ADP + H(+). The protein operates within carbohydrate degradation; glycolysis; pyruvate from D-glyceraldehyde 3-phosphate: step 5/5. With respect to regulation, activated by fructose 2,6-bisphosphate, activated by the effector in a cooperative manner. In Trypanosoma brucei brucei, this protein is Pyruvate kinase 2 (PYK2).